Reading from the N-terminus, the 270-residue chain is Imidazole glycerol phosphate synthase subunit HisF (270 aa).

Active-site residues include aspartate 11 and aspartate 130.

The protein belongs to the HisA/HisF family. Heterodimer of HisH and HisF.

The protein resides in the cytoplasm. The catalysed reaction is 5-[(5-phospho-1-deoxy-D-ribulos-1-ylimino)methylamino]-1-(5-phospho-beta-D-ribosyl)imidazole-4-carboxamide + L-glutamine = D-erythro-1-(imidazol-4-yl)glycerol 3-phosphate + 5-amino-1-(5-phospho-beta-D-ribosyl)imidazole-4-carboxamide + L-glutamate + H(+). It participates in amino-acid biosynthesis; L-histidine biosynthesis; L-histidine from 5-phospho-alpha-D-ribose 1-diphosphate: step 5/9. IGPS catalyzes the conversion of PRFAR and glutamine to IGP, AICAR and glutamate. The HisF subunit catalyzes the cyclization activity that produces IGP and AICAR from PRFAR using the ammonia provided by the HisH subunit. The protein is Imidazole glycerol phosphate synthase subunit HisF of Sorangium cellulosum (strain So ce56) (Polyangium cellulosum (strain So ce56)).